We begin with the raw amino-acid sequence, 323 residues long: Dof zinc finger protein DOF3.6 (323 aa).

The Dof-type zinc finger occupies 76 to 130; that stretch reads LNCPRCDSTNTKFCYFNNYSLTQPRHFCKTCRRYWTRGGSLRNVPVGGGFRRNKR. Cys-78, Cys-81, Cys-103, and Cys-106 together coordinate Zn(2+). Disordered stretches follow at residues 121–160 and 304–323; these read VGGG…SYSN and GGNS…HLSF. The span at 126–135 shows a compositional bias: basic residues; it reads RRNKRSKSRS. Low complexity predominate over residues 136–159; the sequence is KSTVVVSTDNTTSTSSLTSRPSYS.

Interacts with OBF4. Predominantly expressed in roots.

Its subcellular location is the nucleus. Its function is as follows. Transcription factor that binds specifically to a 5'-AA[AG]G-3' consensus core sequence. Enhances the DNA binding of OBF transcription factors to OCS elements. This is Dof zinc finger protein DOF3.6 (DOF3.6) from Arabidopsis thaliana (Mouse-ear cress).